The sequence spans 368 residues: Ferrochelatase (368 aa).

Fe cation contacts are provided by histidine 209 and glutamate 290.

This sequence belongs to the ferrochelatase family.

It localises to the cytoplasm. It carries out the reaction heme b + 2 H(+) = protoporphyrin IX + Fe(2+). It functions in the pathway porphyrin-containing compound metabolism; protoheme biosynthesis; protoheme from protoporphyrin-IX: step 1/1. Its function is as follows. Catalyzes the ferrous insertion into protoporphyrin IX. The protein is Ferrochelatase of Herminiimonas arsenicoxydans.